The sequence spans 255 residues: 5'-nucleotidase SurE (255 aa).

Positions 8, 9, 40, and 93 each coordinate a divalent metal cation.

It belongs to the SurE nucleotidase family. A divalent metal cation serves as cofactor.

It is found in the cytoplasm. The enzyme catalyses a ribonucleoside 5'-phosphate + H2O = a ribonucleoside + phosphate. Its function is as follows. Nucleotidase that shows phosphatase activity on nucleoside 5'-monophosphates. This is 5'-nucleotidase SurE from Rhodopseudomonas palustris (strain ATCC BAA-98 / CGA009).